The following is a 100-amino-acid chain: Small ribosomal subunit protein uS14 (100 aa).

This sequence belongs to the universal ribosomal protein uS14 family. In terms of assembly, part of the 30S ribosomal subunit. Contacts proteins S3 and S10.

Its function is as follows. Binds 16S rRNA, required for the assembly of 30S particles and may also be responsible for determining the conformation of the 16S rRNA at the A site. The polypeptide is Small ribosomal subunit protein uS14 (Synechococcus sp. (strain CC9605)).